A 355-amino-acid chain; its full sequence is Fructose-1,6-bisphosphatase (355 aa).

AMP is bound by residues 25 to 30 (ILDQQH) and 37 to 41 (TGEFS). Mg(2+) contacts are provided by Asp-78 and Glu-107. 121 to 122 (KY) lines the AMP pocket. Mg(2+) is bound by residues Asp-127, Ile-129, and Asp-130. Residue 130-133 (DGSS) coordinates substrate. Residue Lys-149 coordinates AMP. Substrate is bound by residues 230–233 (NEGN), 263–268 (RYIGSM), Tyr-284, and 294–296 (KLR). A Mg(2+)-binding site is contributed by Glu-300.

This sequence belongs to the FBPase class 1 family. Homotetramer. Mg(2+) serves as cofactor.

The enzyme catalyses beta-D-fructose 1,6-bisphosphate + H2O = beta-D-fructose 6-phosphate + phosphate. The protein operates within carbohydrate biosynthesis; gluconeogenesis. Its activity is regulated as follows. Subject to complex allosteric regulation. The enzyme can assume an active R-state, or an inactive T-state. Intermediate conformations may exist. AMP acts as allosteric inhibitor. AMP binding affects the turnover of bound substrate and not the affinity for substrate. In Kluyveromyces lactis (strain ATCC 8585 / CBS 2359 / DSM 70799 / NBRC 1267 / NRRL Y-1140 / WM37) (Yeast), this protein is Fructose-1,6-bisphosphatase (FBP1).